The following is a 211-amino-acid chain: Uracil phosphoribosyltransferase (211 aa).

Residues Arg-78, Arg-103, and 130 to 138 (DPMLATGGT) each bind 5-phospho-alpha-D-ribose 1-diphosphate. Residues Ile-195 and 200 to 202 (GDA) each bind uracil. 5-phospho-alpha-D-ribose 1-diphosphate is bound at residue Asp-201.

This sequence belongs to the UPRTase family. It depends on Mg(2+) as a cofactor.

The enzyme catalyses UMP + diphosphate = 5-phospho-alpha-D-ribose 1-diphosphate + uracil. Its pathway is pyrimidine metabolism; UMP biosynthesis via salvage pathway; UMP from uracil: step 1/1. Allosterically activated by GTP. Catalyzes the conversion of uracil and 5-phospho-alpha-D-ribose 1-diphosphate (PRPP) to UMP and diphosphate. This chain is Uracil phosphoribosyltransferase, found in Streptomyces coelicolor (strain ATCC BAA-471 / A3(2) / M145).